Consider the following 500-residue polypeptide: MTSALQKNRPGAAFPFDNSYVGLPPHFFAAQAPTAVAEPWLIKLNEALAAELGLDVEALRRDGAAIFSGNLVPEGAEPLAMAYAGHQFGGFSPQLGDGRAILLGEVVDRSGKRYDIQLKGAGPTPFSRRGDGRAAIGPVLREYIISEAMFALGIPATRALAAVTTGEPVYREEVLPGAVFTRVAASHIRVGTFQYFAARGDTDGVRALADYVIDRHYPALKEAENPYLALFDAVCERQAALIARWLHVGFIHGVMNTDNMTVSGETIDFGPCAFMDAYDPATVFSSIDQHGRYAYANQPGIGQWNLARLGETLLPLIDAEPDSAVDKANAVIKSYGERFQAHWLAGMLEKIGLAGEEDGDLDLVQALLSLMQAQGADFTLTFRRLSDLAGDDAAEPEFAASFREPDACGAWLTQWRERLSRDPQTASERAIAMRSVNPAFIPRNHRVEQAIEAAVDNGDFSLFEALLSVLSKPYEDQPGFAAYREPPKPSERVLATFCGT.

Glycine 96, glycine 98, arginine 99, lysine 119, aspartate 131, glycine 132, arginine 182, and arginine 189 together coordinate ATP. Aspartate 258 functions as the Proton acceptor in the catalytic mechanism. Residues asparagine 259 and aspartate 268 each coordinate Mg(2+). Aspartate 268 is a binding site for ATP.

This sequence belongs to the SELO family. Mg(2+) is required as a cofactor. The cofactor is Mn(2+).

The enzyme catalyses L-seryl-[protein] + ATP = 3-O-(5'-adenylyl)-L-seryl-[protein] + diphosphate. The catalysed reaction is L-threonyl-[protein] + ATP = 3-O-(5'-adenylyl)-L-threonyl-[protein] + diphosphate. It catalyses the reaction L-tyrosyl-[protein] + ATP = O-(5'-adenylyl)-L-tyrosyl-[protein] + diphosphate. It carries out the reaction L-histidyl-[protein] + UTP = N(tele)-(5'-uridylyl)-L-histidyl-[protein] + diphosphate. The enzyme catalyses L-seryl-[protein] + UTP = O-(5'-uridylyl)-L-seryl-[protein] + diphosphate. The catalysed reaction is L-tyrosyl-[protein] + UTP = O-(5'-uridylyl)-L-tyrosyl-[protein] + diphosphate. Functionally, nucleotidyltransferase involved in the post-translational modification of proteins. It can catalyze the addition of adenosine monophosphate (AMP) or uridine monophosphate (UMP) to a protein, resulting in modifications known as AMPylation and UMPylation. The polypeptide is Protein nucleotidyltransferase YdiU (Rhizobium johnstonii (strain DSM 114642 / LMG 32736 / 3841) (Rhizobium leguminosarum bv. viciae)).